A 134-amino-acid polypeptide reads, in one-letter code: UPF0412 protein YaaI (134 aa).

The first 23 residues, 1–23 (MRSVLTISVGLLFGLALSSVAHA), serve as a signal peptide directing secretion.

It belongs to the UPF0412 family.

The sequence is that of UPF0412 protein YaaI from Salmonella typhimurium (strain LT2 / SGSC1412 / ATCC 700720).